The sequence spans 153 residues: Transcriptional repressor NrdR (153 aa).

A zinc finger lies at 3–34; it reads CPFCGYEDSKVVDTRPTNEGKTIKRRRECLKC. The ATP-cone domain occupies 49-139; sequence ILVIKKDNRR…VYRQFKDINT (91 aa).

It belongs to the NrdR family. It depends on Zn(2+) as a cofactor.

Its function is as follows. Negatively regulates transcription of bacterial ribonucleotide reductase nrd genes and operons by binding to NrdR-boxes. This Caldicellulosiruptor bescii (strain ATCC BAA-1888 / DSM 6725 / KCTC 15123 / Z-1320) (Anaerocellum thermophilum) protein is Transcriptional repressor NrdR.